The chain runs to 99 residues: uncharacterized protein (99 aa).

The protein belongs to the ycf15 family.

It localises to the plastid. The protein resides in the chloroplast. This is an uncharacterized protein from Saccharum hybrid (Sugarcane).